Here is a 914-residue protein sequence, read N- to C-terminus: Beta-mannosidase A (914 aa).

A signal peptide spans 1–20; that stretch reads MRFTATAAALVASSIPATLG. N-linked (GlcNAc...) asparagine glycans are attached at residues asparagine 39, asparagine 79, asparagine 230, asparagine 265, asparagine 299, asparagine 309, and asparagine 330. Glutamate 462 (proton donor) is an active-site residue. Asparagine 591, asparagine 614, asparagine 641, asparagine 721, asparagine 744, asparagine 773, asparagine 784, and asparagine 909 each carry an N-linked (GlcNAc...) asparagine glycan.

It belongs to the glycosyl hydrolase 2 family. Beta-mannosidase A subfamily. In terms of assembly, homodimer.

It is found in the secreted. It carries out the reaction Hydrolysis of terminal, non-reducing beta-D-mannose residues in beta-D-mannosides.. It participates in glycan metabolism; N-glycan degradation. Functionally, exoglycosidase that cleaves the single beta-linked mannose residue from the non-reducing end of beta-mannosidic oligosaccharides of various complexity and length. Involved in the degradation of polymeric mannan and galactomannan. The sequence is that of Beta-mannosidase A (mndA) from Aspergillus flavus (strain ATCC 200026 / FGSC A1120 / IAM 13836 / NRRL 3357 / JCM 12722 / SRRC 167).